Reading from the N-terminus, the 298-residue chain is Sulfofructose kinase (298 aa).

Residues aspartate 13, lysine 27, glycine 39, serine 95, and arginine 138 each contribute to the 6-deoxy-6-sulfo-D-fructose site. Residues threonine 212, glycine 214, glycine 217, and glycine 243 each contribute to the ATP site. Aspartate 244 contributes to the 6-deoxy-6-sulfo-D-fructose binding site.

The protein belongs to the carbohydrate kinase PfkB family. As to quaternary structure, homodimer.

It carries out the reaction 6-deoxy-6-sulfo-D-fructose + ATP = 6-deoxy-6-sulfo-D-fructose 1-phosphate + ADP + H(+). Strongly inhibited by ADP. Activated by sulfoquinovose (SQ), sulfolactaldehyde (SLA) and dihydroxyacetone phosphate (DHAP) (through effects on KM) and by fructose 6-phosphate (F6P), fructose bisphosphate (FBP), phosphoenolpyruvate (PEP) and citrate (through effects on kcat/KM). Functionally, phosphorylates 6-deoxy-6-sulfo-D-fructose (SF) to 6-deoxy-6-sulfo-D-fructose 1-phosphate (SFP). Cannot phosphorylate fructose 6-phosphate. The protein is Sulfofructose kinase (yihV) of Escherichia coli (strain K12).